Reading from the N-terminus, the 204-residue chain is Urease accessory protein UreG (204 aa).

12–19 provides a ligand contact to GTP; the sequence is GPVGSGKT.

The protein belongs to the SIMIBI class G3E GTPase family. UreG subfamily. As to quaternary structure, homodimer. UreD, UreF and UreG form a complex that acts as a GTP-hydrolysis-dependent molecular chaperone, activating the urease apoprotein by helping to assemble the nickel containing metallocenter of UreC. The UreE protein probably delivers the nickel.

Its subcellular location is the cytoplasm. In terms of biological role, facilitates the functional incorporation of the urease nickel metallocenter. This process requires GTP hydrolysis, probably effectuated by UreG. This Pseudomonas paraeruginosa (strain DSM 24068 / PA7) (Pseudomonas aeruginosa (strain PA7)) protein is Urease accessory protein UreG.